A 530-amino-acid polypeptide reads, in one-letter code: ATP-dependent 6-phosphofructokinase 4, chloroplastic (530 aa).

The N-terminal 54 residues, Met-1–Arg-54, are a transit peptide targeting the chloroplast. Ser-121 carries the post-translational modification Phosphoserine. ATP is bound by residues Gly-152, Arg-215–Gly-216, and Gly-240–Thr-243. Residues Thr-269–Asp-271, Met-314–Arg-316, Glu-370, and Tyr-427–Arg-430 each bind substrate. Residue Asp-271 is the Proton acceptor of the active site.

Belongs to the phosphofructokinase type A (PFKA) family. PPi-dependent PFK group II subfamily. Atypical ATP-dependent clade 'X' sub-subfamily. Homotetramer. It depends on Mg(2+) as a cofactor. As to expression, expressed in leaves, stems and flowers.

Its subcellular location is the plastid. It is found in the chloroplast. It carries out the reaction beta-D-fructose 6-phosphate + ATP = beta-D-fructose 1,6-bisphosphate + ADP + H(+). The protein operates within carbohydrate degradation; glycolysis; D-glyceraldehyde 3-phosphate and glycerone phosphate from D-glucose: step 3/4. With respect to regulation, allosterically activated by AMP. Catalyzes the phosphorylation of D-fructose 6-phosphate to fructose 1,6-bisphosphate by ATP, the first committing step of glycolysis. The protein is ATP-dependent 6-phosphofructokinase 4, chloroplastic of Arabidopsis thaliana (Mouse-ear cress).